Reading from the N-terminus, the 122-residue chain is Small ribosomal subunit protein uS13 (122 aa).

Residues 95–122 form a disordered region; the sequence is GLPVHGQRTKTNARTRKGPARTVAGKKK.

The protein belongs to the universal ribosomal protein uS13 family. As to quaternary structure, part of the 30S ribosomal subunit. Forms a loose heterodimer with protein S19. Forms two bridges to the 50S subunit in the 70S ribosome.

Located at the top of the head of the 30S subunit, it contacts several helices of the 16S rRNA. In the 70S ribosome it contacts the 23S rRNA (bridge B1a) and protein L5 of the 50S subunit (bridge B1b), connecting the 2 subunits; these bridges are implicated in subunit movement. Contacts the tRNAs in the A and P-sites. The sequence is that of Small ribosomal subunit protein uS13 from Geotalea uraniireducens (strain Rf4) (Geobacter uraniireducens).